Consider the following 114-residue polypeptide: T cell receptor beta variable 6-6 (114 aa).

An N-terminal signal peptide occupies residues 1–21; sequence MSISLLCCAAFPLLWAGPVNA. The Ig-like domain maps to 22-114; sequence GVTQTPKFRI…TSVYFCASSY (93 aa). Residues Cys-42 and Cys-110 are joined by a disulfide bond. N-linked (GlcNAc...) asparagine glycosylation is present at Asn-84.

Alpha-beta TR is a heterodimer composed of an alpha and beta chain; disulfide-linked. The alpha-beta TR is associated with the transmembrane signaling CD3 coreceptor proteins to form the TR-CD3 (TcR or TCR). The assembly of alpha-beta TR heterodimers with CD3 occurs in the endoplasmic reticulum where a single alpha-beta TR heterodimer associates with one CD3D-CD3E heterodimer, one CD3G-CD3E heterodimer and one CD247 homodimer forming a stable octameric structure. CD3D-CD3E and CD3G-CD3E heterodimers preferentially associate with TR alpha and TR beta chains, respectively. The association of the CD247 homodimer is the last step of TcR assembly in the endoplasmic reticulum and is required for transport to the cell surface.

It is found in the cell membrane. V region of the variable domain of T cell receptor (TR) beta chain that participates in the antigen recognition. Alpha-beta T cell receptors are antigen specific receptors which are essential to the immune response and are present on the cell surface of T lymphocytes. Recognize peptide-major histocompatibility (MH) (pMH) complexes that are displayed by antigen presenting cells (APC), a prerequisite for efficient T cell adaptive immunity against pathogens. Binding of alpha-beta TR to pMH complex initiates TR-CD3 clustering on the cell surface and intracellular activation of LCK that phosphorylates the ITAM motifs of CD3G, CD3D, CD3E and CD247 enabling the recruitment of ZAP70. In turn ZAP70 phosphorylates LAT, which recruits numerous signaling molecules to form the LAT signalosome. The LAT signalosome propagates signal branching to three major signaling pathways, the calcium, the mitogen-activated protein kinase (MAPK) kinase and the nuclear factor NF-kappa-B (NF-kB) pathways, leading to the mobilization of transcription factors that are critical for gene expression and essential for T cell growth and differentiation. The T cell repertoire is generated in the thymus, by V-(D)-J rearrangement. This repertoire is then shaped by intrathymic selection events to generate a peripheral T cell pool of self-MH restricted, non-autoaggressive T cells. Post-thymic interaction of alpha-beta TR with the pMH complexes shapes TR structural and functional avidity. This Homo sapiens (Human) protein is T cell receptor beta variable 6-6.